The chain runs to 99 residues: Indole-3-acetic acid-induced protein ARG2 (99 aa).

The interval 40–62 (RGGASIGGNMVPKSGEEKVRGGE) is disordered. The segment covering 53–62 (SGEEKVRGGE) has biased composition (basic and acidic residues).

In Vigna radiata var. radiata (Mung bean), this protein is Indole-3-acetic acid-induced protein ARG2 (ARG2).